The primary structure comprises 83 residues: Toxin TdNa5 (83 aa).

A signal peptide spans 1–20 (MKTIIFFIACLMLIDVVVES). The region spanning 21-82 (KDGYIIEHRG…IFDSNNNKCG (62 aa)) is the LCN-type CS-alpha/beta domain. 4 cysteine pairs are disulfide-bonded: C31–C81, C35–C57, C43–C62, and C47–C64. C81 bears the Cysteine amide mark.

This sequence belongs to the long (4 C-C) scorpion toxin superfamily. Sodium channel inhibitor family. Beta subfamily. In terms of tissue distribution, expressed by the venom gland.

It localises to the secreted. Inhibits the sodium currents (Nav) in an apparent irreversible manner. Produces small depolarization and induces repetitive firing in squid axons. Is specific for arthropods (crickets, triatomides, crabs and squids), but is non-toxic to mice. Shows antibacterial activity against both Gram-positive and Gram-negative bacteria. This is Toxin TdNa5 from Tityus discrepans (Venezuelan scorpion).